We begin with the raw amino-acid sequence, 161 residues long: UPF0178 protein BR1979/BS1330_I1973 (161 aa).

It belongs to the UPF0178 family.

This chain is UPF0178 protein BR1979/BS1330_I1973, found in Brucella suis biovar 1 (strain 1330).